Here is a 417-residue protein sequence, read N- to C-terminus: uncharacterized protein (417 aa).

It to M.tuberculosis Rv2067c.

This is an uncharacterized protein from Synechococcus sp. (strain ATCC 27144 / PCC 6301 / SAUG 1402/1) (Anacystis nidulans).